The following is an 86-amino-acid chain: Cell division topological specificity factor (86 aa).

Belongs to the MinE family.

Prevents the cell division inhibition by proteins MinC and MinD at internal division sites while permitting inhibition at polar sites. This ensures cell division at the proper site by restricting the formation of a division septum at the midpoint of the long axis of the cell. This Shewanella sediminis (strain HAW-EB3) protein is Cell division topological specificity factor.